Here is a 195-residue protein sequence, read N- to C-terminus: Glutathione S-transferase class-mu 26 kDa isozyme (195 aa).

The GST N-terminal domain occupies 1–83; it reads MAPKLGYWKI…YIADKHNMLG (83 aa). Glutathione contacts are provided by residues 7–8, 41–45, 54–55, and 67–68; these read YW, WRNEK, NL, and QS. A GST C-terminal domain is found at 85–195; that stretch reads CPKERAEISM…TFGGGDAPPK (111 aa). Tyrosine 111 provides a ligand contact to substrate.

The protein belongs to the GST superfamily. Mu family. In terms of assembly, homodimer.

It carries out the reaction RX + glutathione = an S-substituted glutathione + a halide anion + H(+). In terms of biological role, conjugation of reduced glutathione to a wide number of exogenous and endogenous hydrophobic electrophiles. Functionally, GST isoenzymes appear to play a central role in the parasite detoxification system. Other functions are also suspected including a role in increasing the solubility of haematin in the parasite gut. This chain is Glutathione S-transferase class-mu 26 kDa isozyme, found in Schistosoma mansoni (Blood fluke).